The sequence spans 199 residues: 5'-deoxynucleotidase Ent638_2835 (199 aa).

Substrate contacts are provided by residues 18 to 19 (RW) and histidine 33. Positions 30-142 (VSEHSLQVAM…VKQADALCAY (113 aa)) constitute an HD domain. Positions 33, 68, and 69 each coordinate a divalent metal cation. Residues aspartate 69, 77-80 (DLPT), and aspartate 137 each bind substrate. A divalent metal cation is bound at residue aspartate 137.

Belongs to the 5DNU family. In terms of assembly, homodimer. A divalent metal cation is required as a cofactor.

Its subcellular location is the cytoplasm. The catalysed reaction is a 2'-deoxyribonucleoside 5'-phosphate + H2O = a 2'-deoxyribonucleoside + phosphate. In terms of biological role, catalyzes the strictly specific dephosphorylation of 2'-deoxyribonucleoside 5'-monophosphates. The protein is 5'-deoxynucleotidase Ent638_2835 of Enterobacter sp. (strain 638).